The sequence spans 242 residues: Small ribosomal subunit protein uS2 (242 aa).

Belongs to the universal ribosomal protein uS2 family.

This chain is Small ribosomal subunit protein uS2, found in Shewanella denitrificans (strain OS217 / ATCC BAA-1090 / DSM 15013).